Here is a 495-residue protein sequence, read N- to C-terminus: Ectonucleoside triphosphate diphosphohydrolase 8 (495 aa).

The Cytoplasmic segment spans residues 1 to 8 (MGLSRKEQ). A helical membrane pass occupies residues 9–29 (VFLALLGASGVSGLTALILLL). The Extracellular portion of the chain corresponds to 30 to 471 (VEATSVLLPT…AESYGVWVAK (442 aa)). N-linked (GlcNAc...) asparagine glycosylation is present at Asn-67. Cys-78 and Cys-102 form a disulfide bridge. Catalysis depends on Glu-168, which acts as the Proton acceptor. A disulfide bridge links Cys-246 with Cys-292. The N-linked (GlcNAc...) asparagine glycan is linked to Asn-304. Cys-329 and Cys-335 are disulfide-bonded. The N-linked (GlcNAc...) asparagine glycan is linked to Asn-363. Cys-381 and Cys-403 are disulfide-bonded. A helical membrane pass occupies residues 472–492 (VVFMVLALVAVVGAALVQLFW). The Cytoplasmic segment spans residues 493–495 (LQD).

The protein belongs to the GDA1/CD39 NTPase family. Requires Ca(2+) as cofactor. Mg(2+) serves as cofactor. In terms of processing, N-glycosylated.

It is found in the cell membrane. The enzyme catalyses a ribonucleoside 5'-triphosphate + 2 H2O = a ribonucleoside 5'-phosphate + 2 phosphate + 2 H(+). Not inhibited by ARL 67156. Its function is as follows. Canalicular ectonucleoside NTPDase responsible for the main hepatic NTPDase activity. Ectonucleoside NTPDases catalyze the hydrolysis of gamma- and beta-phosphate residues of nucleotides, playing a central role in concentration of extracellular nucleotides. Has activity toward ATP, ADP, UTP and UDP, but not toward AMP. This chain is Ectonucleoside triphosphate diphosphohydrolase 8 (ENTPD8), found in Homo sapiens (Human).